Here is a 397-residue protein sequence, read N- to C-terminus: Phosphopentomutase (397 aa).

Residues Asp-10, Asp-296, His-301, Asp-337, His-338, and His-349 each coordinate Mn(2+).

This sequence belongs to the phosphopentomutase family. Requires Mn(2+) as cofactor.

The protein resides in the cytoplasm. It carries out the reaction 2-deoxy-alpha-D-ribose 1-phosphate = 2-deoxy-D-ribose 5-phosphate. It catalyses the reaction alpha-D-ribose 1-phosphate = D-ribose 5-phosphate. It functions in the pathway carbohydrate degradation; 2-deoxy-D-ribose 1-phosphate degradation; D-glyceraldehyde 3-phosphate and acetaldehyde from 2-deoxy-alpha-D-ribose 1-phosphate: step 1/2. In terms of biological role, isomerase that catalyzes the conversion of deoxy-ribose 1-phosphate (dRib-1-P) and ribose 1-phosphate (Rib-1-P) to deoxy-ribose 5-phosphate (dRib-5-P) and ribose 5-phosphate (Rib-5-P), respectively. This is Phosphopentomutase from Elusimicrobium minutum (strain Pei191).